We begin with the raw amino-acid sequence, 500 residues long: Betaine aldehyde dehydrogenase, chloroplastic (500 aa).

A chloroplast-targeting transit peptide spans 1–7 (MSMPIPS). 238 to 243 (GSSATG) contacts NAD(+). The active-site Proton acceptor is the glutamate 260. Catalysis depends on cysteine 294, which acts as the Nucleophile.

Belongs to the aldehyde dehydrogenase family. In terms of assembly, homodimer.

The protein resides in the plastid. The protein localises to the chloroplast. It catalyses the reaction betaine aldehyde + NAD(+) + H2O = glycine betaine + NADH + 2 H(+). It functions in the pathway amine and polyamine biosynthesis; betaine biosynthesis via choline pathway; betaine from betaine aldehyde: step 1/1. The chain is Betaine aldehyde dehydrogenase, chloroplastic from Beta vulgaris (Sugar beet).